A 520-amino-acid polypeptide reads, in one-letter code: Sterile alpha motif domain-containing protein 3 (520 aa).

Positions 4–71 (WSVDQVCKWL…KYKQGNQELK (68 aa)) constitute an SAM domain. The disordered stretch occupies residues 67 to 104 (NQELKPTGGPADTSTLTPAQAAPEHEQNPSPTSHGDQT). Residues 94 to 104 (NPSPTSHGDQT) are compositionally biased toward polar residues.

This is Sterile alpha motif domain-containing protein 3 (Samd3) from Mus musculus (Mouse).